Here is a 420-residue protein sequence, read N- to C-terminus: 3-isopropylmalate dehydratase large subunit (420 aa).

Residues cysteine 300, cysteine 360, and cysteine 363 each coordinate [4Fe-4S] cluster.

The protein belongs to the aconitase/IPM isomerase family. LeuC type 2 subfamily. As to quaternary structure, heterodimer of LeuC and LeuD. [4Fe-4S] cluster is required as a cofactor.

The enzyme catalyses (2R,3S)-3-isopropylmalate = (2S)-2-isopropylmalate. The protein operates within amino-acid biosynthesis; L-leucine biosynthesis; L-leucine from 3-methyl-2-oxobutanoate: step 2/4. In terms of biological role, catalyzes the isomerization between 2-isopropylmalate and 3-isopropylmalate, via the formation of 2-isopropylmaleate. The polypeptide is 3-isopropylmalate dehydratase large subunit (Helicobacter hepaticus (strain ATCC 51449 / 3B1)).